The primary structure comprises 445 residues: Protein kinase C and casein kinase substrate in neurons protein 1 (445 aa).

The F-BAR domain maps to 12 to 282 (DETTDSFWEV…TIVSASAQED (271 aa)). 2 coiled-coil regions span residues 146 to 167 (AKKL…KEEK) and 183 to 219 (TTDQ…NKCT). A disordered region spans residues 327–390 (LTQVTHGAEH…PFEEDSKGVR (64 aa)). Polar residues-rich tracts occupy residues 338-358 (TPQT…QYSA) and 368-379 (TAAQSASETNGG). An SH3 domain is found at 386–445 (SKGVRVRALYDYEGQEQDELTFKAGDELTKLEDEDEQGWCKGRLDSGQLGLYPANYVEPV).

In terms of assembly, interacts with cobl.

Its subcellular location is the cytoplasm. The protein localises to the cytosol. It is found in the cell membrane. It localises to the cell projection. The protein resides in the synapse. Its subcellular location is the synaptosome. The protein localises to the cytoplasmic vesicle membrane. It is found in the ruffle membrane. It localises to the membrane. Functionally, binds to membranes via its F-BAR domain and mediates membrane tubulation. Plays a role in cellular transport processes by recruiting dynamins to membranes. Plays a role in the reorganization of the actin cytoskeleton and in neuron morphogenesis via its interaction with cobl, and by recruiting cobl to the cell cortex. Plays a role in the regulation of neurite formation, neurite branching and the regulation of neurite length. Required for normal synaptic vesicle endocytosis; this process retrieves previously released neurotransmitters to accommodate multiple cycles of neurotransmission. Required for normal excitatory and inhibitory synaptic transmission. Required for normal embryonic development, including normal development of laterality, normal body size and shape, as well as normal brain and heart development. Required for normal development of stereocilia and kinocilia in sensory hair cells of neuromasts in the posterior lateral line organ, and thus also for balance keeping and normal swimming behavior. The chain is Protein kinase C and casein kinase substrate in neurons protein 1 (pacsin1b) from Danio rerio (Zebrafish).